Here is a 137-residue protein sequence, read N- to C-terminus: Large ribosomal subunit protein uL16 (137 aa).

Basic residues predominate over residues 1–17 (MLQPKRTKFRKQQKGRN). Residues 1–21 (MLQPKRTKFRKQQKGRNRGQA) form a disordered region.

The protein belongs to the universal ribosomal protein uL16 family. Part of the 50S ribosomal subunit.

Its function is as follows. Binds 23S rRNA and is also seen to make contacts with the A and possibly P site tRNAs. The polypeptide is Large ribosomal subunit protein uL16 (Nitrosococcus oceani (strain ATCC 19707 / BCRC 17464 / JCM 30415 / NCIMB 11848 / C-107)).